We begin with the raw amino-acid sequence, 4473 residues long: Plectin (4473 aa).

Calponin-homology (CH) domains are found at residues 1–74 and 87–192; these read DGHN…LHFQ and MTAK…DAMP. Residues 1-192 form an actin-binding region; it reads DGHNLISLLE…YVSSLYDAMP (192 aa). Positions 1–1259 are globular 1; the sequence is DGHNLISLLE…SELTTLTSQY (1259 aa). The Spectrin 1 repeat unit spans residues 449-508; that stretch reads RYLQDLLAWVEENQRRIDSAEWGVDLPSVEAQLGSHRGMHQSIEEFRAKIERARNDESQL. S509 carries the phosphoserine modification. Spectrin repeat units lie at residues 529-613 and 626-719; these read KLLN…REDH and LQTQ…AIVQ. T604 carries the phosphothreonine modification. In terms of domain architecture, SH3 spans 730–787; it reads RGHVPLMAVCDYKQVEVTVHKGDQCQLVGPAQPSHWKVLRGPSSEAAVPSVCFLVPPP. The residue at position 836 (S836) is a Phosphoserine. One copy of the Spectrin 4 repeat lies at 1104–1204; sequence RERVNQLLER…QKFAKQYINA (101 aa). The residue at position 1224 (S1224) is a Phosphoserine. A coiled-coil region spans residues 1258–2548; the sequence is QYIKFISETL…EEIAATQAAA (1291 aa). Positions 1260–2544 are central fibrous rod domain; sequence IKFISETLRR…LAHSEEIAAT (1285 aa). Disordered stretches follow at residues 1274 to 1293 and 1407 to 1434; these read ERLA…EGEA and RAEE…DESQ. At S1510 the chain carries Phosphoserine. Residue K1514 is modified to N6-acetyllysine. Disordered stretches follow at residues 1529-1550, 1582-1616, 1881-1929, 1950-1971, and 2003-2098; these read VTQL…ERAR, SLAQ…RELA, AEDT…AARQ, LRER…AAQK, and ERLR…KHKK. 3 stretches are compositionally biased toward basic and acidic residues: residues 1587–1616, 1881–1897, and 1905–1917; these read DAEK…RELA, AEDT…EAAR, and EEQR…ERVQ. Over residues 1959-1968 the composition is skewed to low complexity; the sequence is ARQLQLAQEA. The segment covering 2003–2047 has biased composition (basic and acidic residues); that stretch reads ERLRGEAEAARRAAEEAEEAREQAEREAAQSRKQVEEAERLKQSA. Residues 2048–2061 are compositionally biased toward low complexity; sequence EEQAQARAQAQAAA. A compositionally biased stretch (basic and acidic residues) spans 2062 to 2077; that stretch reads EKLRKEAEQEAARRAQ. S2420 is subject to Phosphoserine. N6-acetyllysine is present on K2425. The segment at 2457-2476 is disordered; that stretch reads REEQQRQQRQMEQEKQELVA. Residues 2545-4473 form a globular 2 region; the sequence is QAAAAKALPN…SLGGPESAVA (1929 aa). 2 positions are modified to phosphoserine: S2563 and S2591. Plectin repeat units follow at residues 2615–2652, 2653–2690, 2691–2728, 2729–2766, and 2770–2804; these read RQYL…PGTA, LILL…PELH, HKLL…RDHA, IRLL…EEMS, and ADPG…PETG. Phosphothreonine is present on T2675. Y2822 bears the Phosphotyrosine mark. An N6-acetyllysine mark is found at K2842 and K2880. Plectin repeat units lie at residues 2905 to 2942, 2943 to 2980, 2981 to 3018, 3019 to 3056, and 3057 to 3094; these read ALVP…ADSV, RRAL…PDVA, VALL…PELH, EKLL…REQG, and LRLL…KETN. The residue at position 3151 (Y3151) is a Phosphotyrosine. K3209 bears the N6-acetyllysine mark. Plectin repeat units lie at residues 3274–3311, 3312–3349, 3350–3387, 3388–3425, and 3429–3463; these read RTLL…PSTA, TLLL…PELH, EKLL…REHA, IRLL…EEMS, and ADPS…PETG. T3574 carries the phosphothreonine modification. The residue at position 3579 (Y3579) is a Phosphotyrosine. Plectin repeat units lie at residues 3609 to 3646, 3647 to 3684, 3685 to 3722, 3723 to 3760, 3764 to 3797, and 3800 to 3834; these read WRYL…AEVA, RLLL…PELH, DRLL…AEEA, LRLL…KDTH, SEPS…DGSG, and LLPL…EATA. Position 3819 is a phosphothreonine (T3819). S3843 is modified (phosphoserine). Plectin repeat units lie at residues 3852–3889, 3890–3927, 3928–3965, 3966–4003, 4007–4041, and 4043–4094; these read QKFL…PGTA, FELL…PEFK, DRLL…KDHG, IRLL…EEMN, TDPS…PQTG, and RLLP…HQTY. Residues 4039 to 4089 are binding to intermediate filaments; it reads QTGLRLLPLKEKKRERKTSSKSSVRKRRVVIVDPETSKEMSVYEAYRKGLI. 8 positions are modified to phosphoserine: S4171, S4173, S4174, S4175, S4178, S4179, S4180, and S4181. Y4182 bears the Phosphotyrosine mark. Phosphoserine occurs at positions 4185, 4189, and 4195. Plectin repeat units lie at residues 4197–4234, 4235–4272, 4273–4310, 4311–4348, and 4349–4386; these read SDPT…NITG, QRLL…KIMV, DRIN…YEAG, QRFL…ARTA, and QKLR…EGTG. The residue at position 4200 (T4200) is a Phosphothreonine. The residue at position 4328 (T4328) is a Phosphothreonine; by CDK1. Phosphoserine is present on residues S4396 and S4402. Residues 4400-4460 show a composition bias toward low complexity; sequence YYSPYSVSGS…SGYGRRYASG (61 aa). The interval 4400 to 4473 is disordered; that stretch reads YYSPYSVSGS…SLGGPESAVA (74 aa). Residue Y4404 is modified to Phosphotyrosine. S4405, S4407, and S4411 each carry phosphoserine. A Phosphothreonine modification is found at T4412. Positions 4414 to 4429 are 4 X 4 AA tandem repeats of G-S-R-X; that stretch reads GSRTGSRTGSRAGSRR. At S4415 the chain carries Phosphoserine. 2 positions are modified to omega-N-methylarginine: R4416 and R4429. Residues S4431 and S4464 each carry the phosphoserine modification.

It belongs to the plakin or cytolinker family. Homodimer or homotetramer. Interacts (via actin-binding domain) with SYNE3. Interacts (via calponin-homology (CH) 1 domain) with VIM (via rod region). Interacts (via N-terminus) with DST isoform 2 (via N-terminus). Interacts with FER. Interacts with TOR1A. Interacts with ANK3. Identified in complexes that contain VIM, EZR, AHNAK, BFSP1, BFSP2, ANK2, PLEC, PRX and spectrin. Post-translationally, phosphorylated by CDK1; regulates dissociation from intermediate filaments during mitosis.

The protein resides in the cytoplasm. Its subcellular location is the cytoskeleton. It localises to the cell junction. The protein localises to the hemidesmosome. It is found in the cell projection. The protein resides in the podosome. In terms of biological role, interlinks intermediate filaments with microtubules and microfilaments and anchors intermediate filaments to desmosomes or hemidesmosomes. May be involved not only in the cross-linking and stabilization of cytoskeletal intermediate filaments network, but also in the regulation of their dynamics. In Cricetulus griseus (Chinese hamster), this protein is Plectin (PLEC).